The chain runs to 428 residues: uncharacterized protein (428 aa).

The segment at S72–S91 is disordered. S127 carries the post-translational modification Phosphoserine.

This is an uncharacterized protein from Saccharomyces cerevisiae (strain ATCC 204508 / S288c) (Baker's yeast).